A 70-amino-acid polypeptide reads, in one-letter code: Sporulation protein YhaL (70 aa).

Residues 3-23 traverse the membrane as a helical segment; the sequence is FFPWWVYLCIVGIIFSAYKLV. The interval 48–70 is disordered; the sequence is MEKERERRSSQQHEEENQNHSIA.

It localises to the cell membrane. In terms of biological role, required for efficient sporulation. The protein is Sporulation protein YhaL (yhaL) of Bacillus subtilis (strain 168).